A 515-amino-acid chain; its full sequence is MTQDKEVKVVAPDVAPDQEVEINKSVKDAKHQTNDDSLLQHKKKGKKGKKSKPIVTPEHIAKVRAEREVMRKAKRDAMLAQGVDPDCPPELHFIRRPFLSLHEAEPVTGFRFKLMTYNCLAQALIRRKLFPDSGDALKWYRRSKVLLNEFKYYNSDVICLQEIDHIQFQSFWKDEFSKLGYDGQYYRNATKNHGVAIMWRRELFHQVDKMLIDYDKESSESISTRTTTNNVGLVLALKFSEKVLSNLGKKSSKKCGILIGTTHLFWHPFGTYERTRQCYIVLKKMKEFMHRVNVLQNENDGDLSHWFPFFCGDFNSQPFDTPYLSMTSKPVHYRNRAKTVIGCSTSYKFSKVRDGEEGADDEEGGNIEKYGKDQPESPVPEKFHANEEQSELVDKMAQLHNSLDMRAISLYSVGYKNVHPENAGLDNDRGEPEISNWANTWRGLLDYLFYVKKWDPQSNCQEVETLGDFEKENKVKCRGFLRMPPGNEMTKHGQPHVGEYASDHLSMVCDLELQL.

Disordered regions lie at residues 1-54 (MTQD…SKPI) and 353-381 (RDGE…PVPE). Residues 21-34 (EINKSVKDAKHQTN) show a composition bias toward basic and acidic residues. Residues 40 to 52 (QHKKKGKKGKKSK) are compositionally biased toward basic residues. Residues 369-381 (KYGKDQPESPVPE) are compositionally biased toward basic and acidic residues.

This sequence belongs to the CCR4/nocturin family.

Its subcellular location is the cytoplasm. The protein resides in the nucleus. Functionally, involved in pre-rRNA processing. Required for the final stage of 3'-end maturation of 5.8S rRNA at site E. This Saccharomyces cerevisiae (strain ATCC 204508 / S288c) (Baker's yeast) protein is RNA exonuclease NGL2 (NGL2).